We begin with the raw amino-acid sequence, 277 residues long: Diaminopimelate epimerase (277 aa).

N11 and N62 together coordinate substrate. Catalysis depends on C71, which acts as the Proton donor. Substrate is bound by residues 72–73 (GN), N160, N193, and 211–212 (ER). C220 (proton acceptor) is an active-site residue. Position 221 to 222 (221 to 222 (GT)) interacts with substrate.

It belongs to the diaminopimelate epimerase family. As to quaternary structure, homodimer.

It localises to the cytoplasm. It carries out the reaction (2S,6S)-2,6-diaminopimelate = meso-2,6-diaminopimelate. Its pathway is amino-acid biosynthesis; L-lysine biosynthesis via DAP pathway; DL-2,6-diaminopimelate from LL-2,6-diaminopimelate: step 1/1. Catalyzes the stereoinversion of LL-2,6-diaminopimelate (L,L-DAP) to meso-diaminopimelate (meso-DAP), a precursor of L-lysine. The protein is Diaminopimelate epimerase of Methanococcus maripaludis (strain C5 / ATCC BAA-1333).